We begin with the raw amino-acid sequence, 244 residues long: NAD-dependent protein deacetylase (244 aa).

The Deacetylase sirtuin-type domain occupies 1 to 244; that stretch reads MDDKINKLKE…IGKVLGKVID (244 aa). The NAD(+) site is built by A24, T28, F35, R36, Q105, I107, D108, and H123. Residue F35 coordinates nicotinamide. The nicotinamide site is built by I107 and D108. H123 serves as the catalytic Proton acceptor. Zn(2+)-binding residues include C131, C134, C152, and C155. Positions 193, 194, 217, and 235 each coordinate NAD(+).

Belongs to the sirtuin family. Class U subfamily. The cofactor is Zn(2+).

It localises to the cytoplasm. The enzyme catalyses N(6)-acetyl-L-lysyl-[protein] + NAD(+) + H2O = 2''-O-acetyl-ADP-D-ribose + nicotinamide + L-lysyl-[protein]. NAD-dependent protein deacetylase which modulates the activities of several enzymes which are inactive in their acetylated form. This chain is NAD-dependent protein deacetylase, found in Clostridium perfringens (strain 13 / Type A).